The sequence spans 342 residues: Trans-enoyl reductase himH (342 aa).

An NADP(+)-binding site is contributed by 46–49; sequence TDWK. 133-140 is a substrate binding site; it reads LSVSTAAS. Residues 168-171, 191-194, 255-256, and 329-330 each bind NADP(+); these read SSSV, SQAN, VM, and VS.

Belongs to the zinc-containing alcohol dehydrogenase family. In terms of assembly, monomer.

The protein operates within secondary metabolite biosynthesis. Its function is as follows. Trans-enoyl reductase; part of the him gene cluster that mediates the biosynthesis of himeic acid A, a ubiquitin-activating enzyme (E1) inhibitor. First, himA, together with the trans-enoyl reductase himH, catalyzes the formation of apolyketide chain, which is then condensed with leucine by the NRPS activity of himA. Dieckmann cyclization and release from himA gives a tetramic acid intermediate as the product of himA PKS-NRPS. HimG then catalyzes alpha-oxidation of the tetramic acid ring, with a subsequent rearrangement to yield apyrone intermediate. Two terminal methyl groups of polyketide and amide side chains are oxidized to carboxylic acids by himC cytochrome P450 monooxygenase to form himeic acid A. Himeic acid A is further converted to himeic acid B and C during culture growth. No gene responsible for pyrone to pyridone conversion was found in the him gene cluster and himeic acid A is non-enzymatically converted to himeic acid C by the incorporation of an ammonium nitrogen atom in a pH5 buffer, and to himeic acid B at a conversion ratio of 50% during incubation in MeOH for 5 days. This Aspergillus japonicus protein is Trans-enoyl reductase himH.